Reading from the N-terminus, the 368-residue chain is Glutamate 5-kinase (368 aa).

Position 9 (lysine 9) interacts with ATP. Positions 49, 136, and 148 each coordinate substrate. ATP-binding positions include 168–169 (TD) and 210–216 (TGGMMTK). One can recognise a PUA domain in the interval 275-353 (AGIITIDNGA…ADIENVLGYE (79 aa)).

This sequence belongs to the glutamate 5-kinase family.

Its subcellular location is the cytoplasm. The catalysed reaction is L-glutamate + ATP = L-glutamyl 5-phosphate + ADP. It participates in amino-acid biosynthesis; L-proline biosynthesis; L-glutamate 5-semialdehyde from L-glutamate: step 1/2. Its function is as follows. Catalyzes the transfer of a phosphate group to glutamate to form L-glutamate 5-phosphate. This chain is Glutamate 5-kinase, found in Haemophilus influenzae (strain PittGG).